The sequence spans 368 residues: Peptide chain release factor 2 (368 aa).

Q250 bears the N5-methylglutamine mark.

Belongs to the prokaryotic/mitochondrial release factor family. In terms of processing, methylated by PrmC. Methylation increases the termination efficiency of RF2.

Its subcellular location is the cytoplasm. Peptide chain release factor 2 directs the termination of translation in response to the peptide chain termination codons UGA and UAA. This is Peptide chain release factor 2 from Rickettsia conorii (strain ATCC VR-613 / Malish 7).